The chain runs to 947 residues: Bifunctional glutamine synthetase adenylyltransferase/adenylyl-removing enzyme (947 aa).

Residues 1 to 440 form an adenylyl removase region; that stretch reads MTPLSSPLSQ…VFNELIGDDE (440 aa). The segment at 450-947 is adenylyl transferase; the sequence is SEPWREVWQD…ASWRKWLVAV (498 aa).

This sequence belongs to the GlnE family. It depends on Mg(2+) as a cofactor.

The catalysed reaction is [glutamine synthetase]-O(4)-(5'-adenylyl)-L-tyrosine + phosphate = [glutamine synthetase]-L-tyrosine + ADP. It carries out the reaction [glutamine synthetase]-L-tyrosine + ATP = [glutamine synthetase]-O(4)-(5'-adenylyl)-L-tyrosine + diphosphate. Its function is as follows. Involved in the regulation of glutamine synthetase GlnA, a key enzyme in the process to assimilate ammonia. When cellular nitrogen levels are high, the C-terminal adenylyl transferase (AT) inactivates GlnA by covalent transfer of an adenylyl group from ATP to specific tyrosine residue of GlnA, thus reducing its activity. Conversely, when nitrogen levels are low, the N-terminal adenylyl removase (AR) activates GlnA by removing the adenylyl group by phosphorolysis, increasing its activity. The regulatory region of GlnE binds the signal transduction protein PII (GlnB) which indicates the nitrogen status of the cell. The protein is Bifunctional glutamine synthetase adenylyltransferase/adenylyl-removing enzyme of Salmonella newport (strain SL254).